A 143-amino-acid polypeptide reads, in one-letter code: Anti-sigma F factor (143 aa).

The protein belongs to the anti-sigma-factor family.

It catalyses the reaction L-seryl-[protein] + ATP = O-phospho-L-seryl-[protein] + ADP + H(+). It carries out the reaction L-threonyl-[protein] + ATP = O-phospho-L-threonyl-[protein] + ADP + H(+). In terms of biological role, binds to sigma F and blocks its ability to form an RNA polymerase holoenzyme (E-sigma F). Phosphorylates SpoIIAA on a serine residue. This phosphorylation may enable SpoIIAA to act as an anti-anti-sigma factor that counteracts SpoIIAB and thus releases sigma F from inhibition. The polypeptide is Anti-sigma F factor (Clostridium botulinum (strain Alaska E43 / Type E3)).